We begin with the raw amino-acid sequence, 293 residues long: Protease HtpX homolog (293 aa).

2 helical membrane-spanning segments follow: residues 4 to 24 (VILF…TLRI) and 40 to 60 (ALLM…LLIS). His-146 contributes to the Zn(2+) binding site. Glu-147 is a catalytic residue. Position 150 (His-150) interacts with Zn(2+). The next 2 membrane-spanning stretches (helical) occupy residues 161–181 (LIQG…GYFV) and 198–218 (VTVI…VAWF). Position 223 (Glu-223) interacts with Zn(2+).

Belongs to the peptidase M48B family. The cofactor is Zn(2+).

It is found in the cell inner membrane. The sequence is that of Protease HtpX homolog from Bordetella avium (strain 197N).